The following is a 278-amino-acid chain: Octanoyltransferase LipM (278 aa).

Residues 33–248 enclose the BPL/LPL catalytic domain; the sequence is KKMPPTIRFY…GFEKGLDVEL (216 aa). Cys-150 serves as the catalytic Acyl-thioester intermediate.

It belongs to the octanoyltransferase LipM family. As to quaternary structure, monomer.

The catalysed reaction is octanoyl-[ACP] + L-lysyl-[protein] = N(6)-octanoyl-L-lysyl-[protein] + holo-[ACP] + H(+). Its pathway is protein modification; protein lipoylation via endogenous pathway; protein N(6)-(lipoyl)lysine from octanoyl-[acyl-carrier-protein]. Catalyzes the transfer of endogenously produced octanoic acid from octanoyl-acyl-carrier-protein onto the lipoyl domain of GcvH, an intermediate carrier during protein lipoylation. The sequence is that of Octanoyltransferase LipM from Bacillus cereus (strain ATCC 14579 / DSM 31 / CCUG 7414 / JCM 2152 / NBRC 15305 / NCIMB 9373 / NCTC 2599 / NRRL B-3711).